A 248-amino-acid polypeptide reads, in one-letter code: Probable transcriptional regulatory protein RHECIAT_CH0003714 (248 aa).

This sequence belongs to the TACO1 family.

The protein localises to the cytoplasm. The protein is Probable transcriptional regulatory protein RHECIAT_CH0003714 of Rhizobium etli (strain CIAT 652).